Reading from the N-terminus, the 437-residue chain is MPESRVKDSSLADRGREQLYWAELNMPVLLEIRRRFEKEKPLSGHVIAACLHVTKETGVLVRTLAAGGAEVVLIPSNPLSTQDDVAAALAQEGIHVYAWRGMSEREYYNAIGFALSFNPTITMDDGADLTATIHKIGHGVRDQTIEYVLETAGSLDAAGLFSRIRGGTEETTTGVIRLKALKKSGKLLYPIIAVNESYTKYLFDNRYGTGQSTWDGVMRATNLLIAGKNVVIAGYGWVGRGIAIRARGLGARRVIVVEVDPIRALEAVFDGYEVMPMDKAAEVGDIFITATGNIRAISLGHIFKMKDGAVLANAGHFNVEIDVAGLERVAVAKRRIRPYLEEYTLPNGKRVYLIGEGRLVNLVAAEGHPSEVMDLSFANQALAAEFLAKNKLSVDVYKLPDEIDREVARLKLKTMGIEIEELTEEQRRYISSWELGT.

Substrate-binding residues include Thr-54, Asp-125, and Glu-170. 171–173 (TTT) is an NAD(+) binding site. Lys-200 and Asp-204 together coordinate substrate. NAD(+)-binding positions include Asn-205, 234 to 239 (GYGWVG), Glu-258, Asn-293, 314 to 316 (AGH), and Asn-361.

This sequence belongs to the adenosylhomocysteinase family. The cofactor is NAD(+).

Its subcellular location is the cytoplasm. It carries out the reaction S-adenosyl-L-homocysteine + H2O = L-homocysteine + adenosine. The protein operates within amino-acid biosynthesis; L-homocysteine biosynthesis; L-homocysteine from S-adenosyl-L-homocysteine: step 1/1. In terms of biological role, may play a key role in the regulation of the intracellular concentration of adenosylhomocysteine. In Pyrobaculum aerophilum (strain ATCC 51768 / DSM 7523 / JCM 9630 / CIP 104966 / NBRC 100827 / IM2), this protein is Adenosylhomocysteinase.